The primary structure comprises 498 residues: Alpha-amylase A (498 aa).

Residues 1-21 (MMVAWWSLFLYGLQVAAPALA) form the signal peptide. A disulfide bond links Cys51 and Cys59. Substrate-binding residues include Gln56 and Trp104. Position 142 (Asn142) interacts with Ca(2+). Position 143 (His143) interacts with substrate. Cys171 and Cys185 are joined by a disulfide. Residues Glu183 and Asp196 each contribute to the Ca(2+) site. The N-linked (GlcNAc...) asparagine glycan is linked to Asn218. Substrate is bound at residue Arg225. Residues Asp227, His231, and Glu251 each contribute to the Ca(2+) site. Asp227 (nucleophile) is an active-site residue. Residue 230–231 (KH) coordinates substrate. Glu251 serves as the catalytic Proton donor. Gly255 contacts substrate. Cys261 and Cys304 are joined by a disulfide. Substrate contacts are provided by Asp318 and Arg365. Cys461 and Cys496 are joined by a disulfide.

Belongs to the glycosyl hydrolase 13 family. Ca(2+) is required as a cofactor.

It catalyses the reaction Endohydrolysis of (1-&gt;4)-alpha-D-glucosidic linkages in polysaccharides containing three or more (1-&gt;4)-alpha-linked D-glucose units.. This is Alpha-amylase A (amyA) from Aspergillus awamori (Black koji mold).